Reading from the N-terminus, the 363-residue chain is UDP-N-acetylglucosamine--N-acetylmuramyl-(pentapeptide) pyrophosphoryl-undecaprenol N-acetylglucosamine transferase (363 aa).

UDP-N-acetyl-alpha-D-glucosamine-binding positions include 10-12 (TGG), Asn124, Ser195, Ile250, and Gln295.

The protein belongs to the glycosyltransferase 28 family. MurG subfamily.

It is found in the cell membrane. The catalysed reaction is di-trans,octa-cis-undecaprenyl diphospho-N-acetyl-alpha-D-muramoyl-L-alanyl-D-glutamyl-meso-2,6-diaminopimeloyl-D-alanyl-D-alanine + UDP-N-acetyl-alpha-D-glucosamine = di-trans,octa-cis-undecaprenyl diphospho-[N-acetyl-alpha-D-glucosaminyl-(1-&gt;4)]-N-acetyl-alpha-D-muramoyl-L-alanyl-D-glutamyl-meso-2,6-diaminopimeloyl-D-alanyl-D-alanine + UDP + H(+). Its pathway is cell wall biogenesis; peptidoglycan biosynthesis. Cell wall formation. Catalyzes the transfer of a GlcNAc subunit on undecaprenyl-pyrophosphoryl-MurNAc-pentapeptide (lipid intermediate I) to form undecaprenyl-pyrophosphoryl-MurNAc-(pentapeptide)GlcNAc (lipid intermediate II). The protein is UDP-N-acetylglucosamine--N-acetylmuramyl-(pentapeptide) pyrophosphoryl-undecaprenol N-acetylglucosamine transferase of Halalkalibacterium halodurans (strain ATCC BAA-125 / DSM 18197 / FERM 7344 / JCM 9153 / C-125) (Bacillus halodurans).